Here is a 446-residue protein sequence, read N- to C-terminus: Exodeoxyribonuclease 7 large subunit (446 aa).

Belongs to the XseA family. Heterooligomer composed of large and small subunits.

The protein localises to the cytoplasm. The enzyme catalyses Exonucleolytic cleavage in either 5'- to 3'- or 3'- to 5'-direction to yield nucleoside 5'-phosphates.. In terms of biological role, bidirectionally degrades single-stranded DNA into large acid-insoluble oligonucleotides, which are then degraded further into small acid-soluble oligonucleotides. The protein is Exodeoxyribonuclease 7 large subunit of Streptococcus pyogenes serotype M6 (strain ATCC BAA-946 / MGAS10394).